Here is a 388-residue protein sequence, read N- to C-terminus: Acetate kinase (388 aa).

Asn-8 contributes to the Mg(2+) binding site. Residue Lys-15 participates in ATP binding. Arg-88 serves as a coordination point for substrate. Catalysis depends on Asp-144, which acts as the Proton donor/acceptor. Residues 202 to 206 (HLGNG), 276 to 278 (DMR), and 321 to 325 (GVGEN) each bind ATP. Residue Glu-375 participates in Mg(2+) binding.

It belongs to the acetokinase family. Homodimer. Mg(2+) serves as cofactor. The cofactor is Mn(2+).

Its subcellular location is the cytoplasm. It catalyses the reaction acetate + ATP = acetyl phosphate + ADP. The protein operates within metabolic intermediate biosynthesis; acetyl-CoA biosynthesis; acetyl-CoA from acetate: step 1/2. In terms of biological role, catalyzes the formation of acetyl phosphate from acetate and ATP. Can also catalyze the reverse reaction. This Mycoplasmoides gallisepticum (strain R(low / passage 15 / clone 2)) (Mycoplasma gallisepticum) protein is Acetate kinase.